The following is a 418-amino-acid chain: Putative competence-damage inducible protein (418 aa).

Belongs to the CinA family.

The polypeptide is Putative competence-damage inducible protein (Streptococcus pneumoniae (strain 70585)).